The primary structure comprises 130 residues: Phosphoribosyl-AMP cyclohydrolase (130 aa).

Residue D77 participates in Mg(2+) binding. C78 is a Zn(2+) binding site. Mg(2+) contacts are provided by D79 and D81. Residues C95 and C102 each coordinate Zn(2+).

It belongs to the PRA-CH family. In terms of assembly, homodimer. Mg(2+) serves as cofactor. It depends on Zn(2+) as a cofactor.

The protein resides in the cytoplasm. It carries out the reaction 1-(5-phospho-beta-D-ribosyl)-5'-AMP + H2O = 1-(5-phospho-beta-D-ribosyl)-5-[(5-phospho-beta-D-ribosylamino)methylideneamino]imidazole-4-carboxamide. The protein operates within amino-acid biosynthesis; L-histidine biosynthesis; L-histidine from 5-phospho-alpha-D-ribose 1-diphosphate: step 3/9. Functionally, catalyzes the hydrolysis of the adenine ring of phosphoribosyl-AMP. The sequence is that of Phosphoribosyl-AMP cyclohydrolase from Pseudomonas entomophila (strain L48).